Consider the following 267-residue polypeptide: 3-methyl-2-oxobutanoate hydroxymethyltransferase (267 aa).

Mg(2+) is bound by residues aspartate 45 and aspartate 84. 3-methyl-2-oxobutanoate contacts are provided by residues 45-46, aspartate 84, and lysine 113; that span reads DS. Glutamate 115 provides a ligand contact to Mg(2+). Residue glutamate 182 is the Proton acceptor of the active site.

The protein belongs to the PanB family. In terms of assembly, homodecamer; pentamer of dimers. Requires Mg(2+) as cofactor.

It is found in the cytoplasm. The catalysed reaction is 3-methyl-2-oxobutanoate + (6R)-5,10-methylene-5,6,7,8-tetrahydrofolate + H2O = 2-dehydropantoate + (6S)-5,6,7,8-tetrahydrofolate. It participates in cofactor biosynthesis; coenzyme A biosynthesis. Its function is as follows. Catalyzes the reversible reaction in which hydroxymethyl group from 5,10-methylenetetrahydrofolate is transferred onto alpha-ketoisovalerate to form ketopantoate. The polypeptide is 3-methyl-2-oxobutanoate hydroxymethyltransferase (Saccharolobus islandicus (strain L.S.2.15 / Lassen #1) (Sulfolobus islandicus)).